The primary structure comprises 461 residues: Porin AaxA (461 aa).

The N-terminal stretch at 1–22 (MSFRSVLLTALLSLSFTTTMQA) is a signal peptide.

Belongs to the OprB family.

The protein resides in the cell outer membrane. In terms of biological role, facilitates L-arginine uptake, as part of the AaxABC system. The arginine uptake by the bacterium in the macrophage may be a virulence factor against the host innate immune response. In Chlamydia trachomatis serovar A (strain ATCC VR-571B / DSM 19440 / HAR-13), this protein is Porin AaxA (aaxA).